The sequence spans 200 residues: Phospholipase A2 inhibitor gamma subunit B (200 aa).

The first 19 residues, 1–19 (MKFLLFCCLFGTFLATGMC), serve as a signal peptide directing secretion. Intrachain disulfides connect Cys22/Cys46, Cys25/Cys32, Cys39/Cys67, Cys73/Cys94, Cys95/Cys100, Cys120/Cys145, Cys138/Cys165, and Cys171/Cys191.

It belongs to the CNF-like-inhibitor family. In terms of assembly, heteromer composed of subunit A and subunit B.

It localises to the secreted. In terms of biological role, inhibits the enzymatic activity of the phospholipase A2 (PLA2). The protein is Phospholipase A2 inhibitor gamma subunit B of Elaphe climacophora (Japanese rat snake).